Consider the following 158-residue polypeptide: Small ribosomal subunit protein uS9 (158 aa).

The protein belongs to the universal ribosomal protein uS9 family.

This Brucella anthropi (strain ATCC 49188 / DSM 6882 / CCUG 24695 / JCM 21032 / LMG 3331 / NBRC 15819 / NCTC 12168 / Alc 37) (Ochrobactrum anthropi) protein is Small ribosomal subunit protein uS9.